The primary structure comprises 286 residues: Large ribosomal subunit protein uL4m (286 aa).

The transit peptide at 1–26 directs the protein to the mitochondrion; it reads MTIKRNLVKTLQSIRYQATTATAHAE. The interval 85–132 is disordered; sequence RRVGASNPPGRSENGFSRRKLMPQKGSGRARVGDANSPTRHNGGRALA.

Belongs to the universal ribosomal protein uL4 family. Component of the mitochondrial large ribosomal subunit (mt-LSU). Mature yeast 74S mitochondrial ribosomes consist of a small (37S) and a large (54S) subunit. The 37S small subunit contains a 15S ribosomal RNA (15S mt-rRNA) and 34 different proteins. The 54S large subunit contains a 21S rRNA (21S mt-rRNA) and 46 different proteins.

Its subcellular location is the mitochondrion. Functionally, component of the mitochondrial ribosome (mitoribosome), a dedicated translation machinery responsible for the synthesis of mitochondrial genome-encoded proteins, including at least some of the essential transmembrane subunits of the mitochondrial respiratory chain. The mitoribosomes are attached to the mitochondrial inner membrane and translation products are cotranslationally integrated into the membrane. This Saccharomyces cerevisiae (strain ATCC 204508 / S288c) (Baker's yeast) protein is Large ribosomal subunit protein uL4m (YML6).